Reading from the N-terminus, the 324-residue chain is Beta-ketoacyl-[acyl-carrier-protein] synthase III (324 aa).

Active-site residues include cysteine 114 and histidine 246. An ACP-binding region spans residues glutamine 247 to arginine 251. Asparagine 276 is a catalytic residue.

The protein belongs to the thiolase-like superfamily. FabH family. In terms of assembly, homodimer.

It is found in the cytoplasm. The catalysed reaction is malonyl-[ACP] + acetyl-CoA + H(+) = 3-oxobutanoyl-[ACP] + CO2 + CoA. It functions in the pathway lipid metabolism; fatty acid biosynthesis. In terms of biological role, catalyzes the condensation reaction of fatty acid synthesis by the addition to an acyl acceptor of two carbons from malonyl-ACP. Catalyzes the first condensation reaction which initiates fatty acid synthesis and may therefore play a role in governing the total rate of fatty acid production. Possesses both acetoacetyl-ACP synthase and acetyl transacylase activities. Its substrate specificity determines the biosynthesis of branched-chain and/or straight-chain of fatty acids. The polypeptide is Beta-ketoacyl-[acyl-carrier-protein] synthase III (Campylobacter jejuni subsp. jejuni serotype O:6 (strain 81116 / NCTC 11828)).